Here is a 107-residue protein sequence, read N- to C-terminus: UPF0045 protein in glkA 3'region (107 aa).

Belongs to the UPF0045 family.

The sequence is that of UPF0045 protein in glkA 3'region (dglA) from Staphylococcus xylosus.